The sequence spans 450 residues: Phosphoglucosamine mutase (450 aa).

The active-site Phosphoserine intermediate is Ser97. 4 residues coordinate Mg(2+): Ser97, Asp236, Asp238, and Asp240. Position 97 is a phosphoserine (Ser97).

Belongs to the phosphohexose mutase family. Mg(2+) serves as cofactor. Activated by phosphorylation.

It catalyses the reaction alpha-D-glucosamine 1-phosphate = D-glucosamine 6-phosphate. Catalyzes the conversion of glucosamine-6-phosphate to glucosamine-1-phosphate. This Prochlorococcus marinus (strain MIT 9215) protein is Phosphoglucosamine mutase.